A 374-amino-acid polypeptide reads, in one-letter code: Tryptophan--tRNA ligase (374 aa).

Positions 71-79 (PSGRMHLGH) match the 'HIGH' region motif. The 'KMSKS' region signature appears at 247–251 (KMSSS).

Belongs to the class-I aminoacyl-tRNA synthetase family.

It is found in the cytoplasm. It catalyses the reaction tRNA(Trp) + L-tryptophan + ATP = L-tryptophyl-tRNA(Trp) + AMP + diphosphate + H(+). This is Tryptophan--tRNA ligase from Methanopyrus kandleri (strain AV19 / DSM 6324 / JCM 9639 / NBRC 100938).